Consider the following 563-residue polypeptide: MLKNPSVKYRAFAPVPLSDRQWPSKTITKPPIWMSTDLRDGNQALFEPMNAERKLRMFEMLVKIGFKEIEAGFPSASDTDFGFIRKLVEEGRVPDDVHIEVLTQARPELIARTMESLKGAKNAIVHVYNATAPNFREVVFQQGKQGVKAIATESARQIKEIAATQPETNWTFQYSPEVFSGTELDFAKEVVDAVTEIWEAGPERKVVINLPATVEMATPNIYADQIEWMHRNLERRDGIILSVHPHNDRGTAVAAAELAIMAGADRVEGCLFGNGERTGNVDLVTLALNLYSQGIDPGLDFAQINEIARTAEYCTQLPIHPRHPYVGDLVFTAFSGSHQDAIKKGLAAYKAGDIWQVPYLPLDPKDLGRTYESIIRVNSQSGKGGVSYLLEAEYDLRLPRRLQVEFSSAVQRVTDDTGKEVRAADIWRIFEEEYLTRAEPIEYLSHSLYDESGKQGVKIRIRRFGKEEELSGSGNGPIDAAMDALKLGVELRHYEEHSIGSGTDAKAVAFMEVADPEHPGDLFGVGIDANIITASFKAMLSAANRAAARRPKSEWARLCGGAE.

Residues 31–305 (PIWMSTDLRD…DPGLDFAQIN (275 aa)) form the Pyruvate carboxyltransferase domain. Mg(2+)-binding residues include Asp-40, His-244, His-246, and Asn-280. The tract at residues 437–563 (RAEPIEYLSH…EWARLCGGAE (127 aa)) is regulatory domain.

It belongs to the alpha-IPM synthase/homocitrate synthase family. LeuA type 2 subfamily. Homodimer. Requires Mg(2+) as cofactor.

The protein localises to the cytoplasm. The catalysed reaction is 3-methyl-2-oxobutanoate + acetyl-CoA + H2O = (2S)-2-isopropylmalate + CoA + H(+). Its pathway is amino-acid biosynthesis; L-leucine biosynthesis; L-leucine from 3-methyl-2-oxobutanoate: step 1/4. Catalyzes the condensation of the acetyl group of acetyl-CoA with 3-methyl-2-oxobutanoate (2-ketoisovalerate) to form 3-carboxy-3-hydroxy-4-methylpentanoate (2-isopropylmalate). The sequence is that of 2-isopropylmalate synthase from Parvibaculum lavamentivorans (strain DS-1 / DSM 13023 / NCIMB 13966).